Consider the following 667-residue polypeptide: Receptor for retinol uptake STRA6 (667 aa).

Positions 1 to 13 (MSSQPAGNQTSPG) are enriched in polar residues. The interval 1–20 (MSSQPAGNQTSPGATEDYSY) is disordered. Residues 1-50 (MSSQPAGNQTSPGATEDYSYGSWYIDEPQGGEELQPEGEVPSCHTSIPPG) are Extracellular-facing. An N-linked (GlcNAc...) asparagine glycan is attached at Asn-8. A helical membrane pass occupies residues 51 to 71 (LYHACLASLSILVLLLLAMLV). Residues 72 to 100 (RRRQLWPDCVRGRPGLPSPVDFLAGDRPR) lie on the Cytoplasmic side of the membrane. A helical transmembrane segment spans residues 101–121 (AVPAAVFMVLLSSLCLLLPDE). Topologically, residues 122 to 144 (DALPFLTLASAPSQDGKTEAPRG) are extracellular. A helical transmembrane segment spans residues 145–165 (AWKILGLFYYAALYYPLAACA). Residues 166–168 (TAG) are Cytoplasmic-facing. A helical membrane pass occupies residues 169 to 189 (HTAAHLLGSTLSWAHLGVQVW). Residues 190–205 (QRAECPQVPKIYKYYS) lie on the Extracellular side of the membrane. The chain crosses the membrane as a helical span at residues 206–226 (LLASLPLLLGLGFLSLWYPVQ). Residues 227–295 (LVRSFSRRTG…PQPGFHLPLK (69 aa)) lie on the Cytoplasmic side of the membrane. An interaction with RBP1 region spans residues 235–293 (TGAGSKGLQSSYSEEYLRNLLCRKKLGSSYHTSKHGFLSWARVCLRHCIYTPQPGFHLP). The chain crosses the membrane as a helical span at residues 296 to 316 (LVLSATLTGTAIYQVALLLLV). At 317 to 367 (GVVPTIQKVRAGVTTDVSYLLAGFGIVLSEDKQEVVELVKHHLWALEVCYI) the chain is on the extracellular side. A helical membrane pass occupies residues 368–388 (SALVLSCLLTFLVLMRSLVTH). The Cytoplasmic portion of the chain corresponds to 389–422 (RTNLRALHRGAALDLSPLHRSPHPSRQAIFCWMS). Residues 423 to 443 (FSAYQTAFICLGLLVQQIIFF) form a helical membrane-spanning segment. The Extracellular segment spans residues 444 to 473 (LGTTALAFLVLMPVLHGRNLLLFRSLESSW). Residues 474–494 (PFWLTLALAVILQNMAAHWVF) traverse the membrane as a helical segment. Residues 495-509 (LETHDGHPQLTNRRV) lie on the Cytoplasmic side of the membrane. Residues 510–547 (LYAATFLLFPLNVLVGAMVATWRVLLSALYNAIHLGQM) constitute an intramembrane region (helical). At 548–667 (DLSLLPPRAA…ALLGANGAQP (120 aa)) the chain is on the cytoplasmic side. At Tyr-643 the chain carries Phosphotyrosine.

As to quaternary structure, homodimer. Interacts with JAK2 and STAT5. Interacts (via extracellular domains) with RBP4. Interacts (via cytoplasmic domains) with RBP1. In terms of processing, phosphorylated on tyrosine residues in response to RBP4 binding. Phosphorylation requires the presence of LRAT, suggesting it may be triggered by the uptake of retinol that is then metabolized within the cell to retinoids that function as signaling molecules. Broad expression. In adult eye expressed in sclera, retina, retinal pigment epithelium, and trabecular meshwork but not in choroid and iris.

It is found in the cell membrane. In terms of biological role, functions as a retinol transporter. Accepts all-trans retinol from the extracellular retinol-binding protein RBP4, facilitates retinol transport across the cell membrane, and then transfers retinol to the cytoplasmic retinol-binding protein RBP1. Retinol uptake is enhanced by LRAT, an enzyme that converts retinol to all-trans retinyl esters, the storage forms of vitamin A. Contributes to the activation of a signaling cascade that depends on retinol transport and LRAT-dependent generation of retinol metabolites that then trigger activation of JAK2 and its target STAT5, and ultimately increase the expression of SOCS3 and inhibit cellular responses to insulin. Important for the homeostasis of vitamin A and its derivatives, such as retinoic acid. STRA6-mediated transport is particularly important in the eye, and under conditions of dietary vitamin A deficiency. Does not transport retinoic acid. The polypeptide is Receptor for retinol uptake STRA6 (STRA6) (Homo sapiens (Human)).